The chain runs to 344 residues: tRNA(Ile)-lysidine synthase (344 aa).

ATP is bound at residue 30 to 35 (SGGQDS). A disordered region spans residues 323–344 (PPPPAPVPPDPGERSPPPSPLY).

It belongs to the tRNA(Ile)-lysidine synthase family.

Its subcellular location is the cytoplasm. The catalysed reaction is cytidine(34) in tRNA(Ile2) + L-lysine + ATP = lysidine(34) in tRNA(Ile2) + AMP + diphosphate + H(+). Its function is as follows. Ligates lysine onto the cytidine present at position 34 of the AUA codon-specific tRNA(Ile) that contains the anticodon CAU, in an ATP-dependent manner. Cytidine is converted to lysidine, thus changing the amino acid specificity of the tRNA from methionine to isoleucine. The polypeptide is tRNA(Ile)-lysidine synthase (Thermosynechococcus vestitus (strain NIES-2133 / IAM M-273 / BP-1)).